Here is a 209-residue protein sequence, read N- to C-terminus: Octanoyltransferase (209 aa).

In terms of domain architecture, BPL/LPL catalytic spans 30–209; the sequence is DHEPEIIYLV…IQTEFNKIFK (180 aa). Residues 69–76, 143–145, and 156–158 each bind substrate; these read RGGKFTFH, AIG, and GVA. Catalysis depends on Cys-174, which acts as the Acyl-thioester intermediate.

This sequence belongs to the LipB family.

It is found in the cytoplasm. It carries out the reaction octanoyl-[ACP] + L-lysyl-[protein] = N(6)-octanoyl-L-lysyl-[protein] + holo-[ACP] + H(+). Its pathway is protein modification; protein lipoylation via endogenous pathway; protein N(6)-(lipoyl)lysine from octanoyl-[acyl-carrier-protein]: step 1/2. In terms of biological role, catalyzes the transfer of endogenously produced octanoic acid from octanoyl-acyl-carrier-protein onto the lipoyl domains of lipoate-dependent enzymes. Lipoyl-ACP can also act as a substrate although octanoyl-ACP is likely to be the physiological substrate. In Rickettsia peacockii (strain Rustic), this protein is Octanoyltransferase.